A 338-amino-acid polypeptide reads, in one-letter code: Ketol-acid reductoisomerase (NADP(+)) (338 aa).

The KARI N-terminal Rossmann domain maps to 1–181 (MKVYYDKDAD…GGTKGGVIET (181 aa)). Residues 24–27 (YGSQ), Arg47, and Ser52 each bind NADP(+). His107 is an active-site residue. Gly133 provides a ligand contact to NADP(+). Residues 182–327 (NFREETETDL…GQLRDMMPWI (146 aa)) form the KARI C-terminal knotted domain. Residues Asp190, Glu194, Glu226, and Glu230 each contribute to the Mg(2+) site. Ser251 lines the substrate pocket.

This sequence belongs to the ketol-acid reductoisomerase family. It depends on Mg(2+) as a cofactor.

It carries out the reaction (2R)-2,3-dihydroxy-3-methylbutanoate + NADP(+) = (2S)-2-acetolactate + NADPH + H(+). The catalysed reaction is (2R,3R)-2,3-dihydroxy-3-methylpentanoate + NADP(+) = (S)-2-ethyl-2-hydroxy-3-oxobutanoate + NADPH + H(+). The protein operates within amino-acid biosynthesis; L-isoleucine biosynthesis; L-isoleucine from 2-oxobutanoate: step 2/4. It functions in the pathway amino-acid biosynthesis; L-valine biosynthesis; L-valine from pyruvate: step 2/4. Involved in the biosynthesis of branched-chain amino acids (BCAA). Catalyzes an alkyl-migration followed by a ketol-acid reduction of (S)-2-acetolactate (S2AL) to yield (R)-2,3-dihydroxy-isovalerate. In the isomerase reaction, S2AL is rearranged via a Mg-dependent methyl migration to produce 3-hydroxy-3-methyl-2-ketobutyrate (HMKB). In the reductase reaction, this 2-ketoacid undergoes a metal-dependent reduction by NADPH to yield (R)-2,3-dihydroxy-isovalerate. This is Ketol-acid reductoisomerase (NADP(+)) from Aromatoleum aromaticum (strain DSM 19018 / LMG 30748 / EbN1) (Azoarcus sp. (strain EbN1)).